Consider the following 84-residue polypeptide: Beta/gamma-crystallin (84 aa).

Beta/gamma crystallin 'Greek key' domains are found at residues 2–42 (GKII…IVES) and 43–84 (GTWF…VKQQ). The disordered stretch occupies residues 64-84 (KYPNPGSWGGNDDELSSVKQQ).

This sequence belongs to the beta/gamma-crystallin family. Monomer. As to expression, palps of larvae and otolith of the light-sensing ocellus.

In terms of biological role, structural component of the neuroectodermal visual system. This chain is Beta/gamma-crystallin, found in Ciona intestinalis (Transparent sea squirt).